The chain runs to 165 residues: CDP-archaeol synthase (165 aa).

Transmembrane regions (helical) follow at residues 4–24, 78–98, and 118–138; these read IVQLFLLIWPPYVANGSAVLA, LLDAFLLATAAIVGDLLGAFV, and FLLMALLVYSLYRELHIPLLL.

It belongs to the CDP-archaeol synthase family. It depends on Mg(2+) as a cofactor.

It is found in the cell membrane. It carries out the reaction 2,3-bis-O-(geranylgeranyl)-sn-glycerol 1-phosphate + CTP + H(+) = CDP-2,3-bis-O-(geranylgeranyl)-sn-glycerol + diphosphate. The protein operates within membrane lipid metabolism; glycerophospholipid metabolism. Its function is as follows. Catalyzes the formation of CDP-2,3-bis-(O-geranylgeranyl)-sn-glycerol (CDP-archaeol) from 2,3-bis-(O-geranylgeranyl)-sn-glycerol 1-phosphate (DGGGP) and CTP. This reaction is the third ether-bond-formation step in the biosynthesis of archaeal membrane lipids. The chain is CDP-archaeol synthase from Pyrobaculum calidifontis (strain DSM 21063 / JCM 11548 / VA1).